The chain runs to 68 residues: Large ribosomal subunit protein uL29 (68 aa).

Positions 32 to 68 are disordered; the sequence is QDQLKRRTGSLDNPAERTQHRRDLARVLTVLTQKTKA. The segment covering 45-56 has biased composition (basic and acidic residues); it reads PAERTQHRRDLA.

The protein belongs to the universal ribosomal protein uL29 family.

In Myxococcus xanthus (strain DK1622), this protein is Large ribosomal subunit protein uL29.